Consider the following 143-residue polypeptide: Large ribosomal subunit protein mL51 (143 aa).

The N-terminal 52 residues, 1 to 52, are a transit peptide targeting the mitochondrion; that stretch reads MAALVRGLMRRVAALPQAVRSVSGGGQRHEPYRPLPITSPLAGLPRNFRVRE.

This sequence belongs to the mitochondrion-specific ribosomal protein mL51 family. As to quaternary structure, component of the mitochondrial ribosome large subunit (39S) which comprises a 16S rRNA and about 50 distinct proteins.

It is found in the mitochondrion. This is Large ribosomal subunit protein mL51 (MRPL51) from Gallus gallus (Chicken).